Here is a 758-residue protein sequence, read N- to C-terminus: Catalase-peroxidase (758 aa).

A compositionally biased stretch (polar residues) spans 1-10; that stretch reads MSDTQDNAPV. The tract at residues 1-57 is disordered; that stretch reads MSDTQDNAPVSAQGVDQKAAAGCPVAHDSVTAHGSESESPAIDSPSAVGGGRPRTNR. Positions 128–250 form a cross-link, tryptophyl-tyrosyl-methioninium (Trp-Tyr) (with M-276); sequence WHAAGTYRIH…VGATEMGLIY (123 aa). Histidine 129 (proton acceptor) is an active-site residue. A cross-link (tryptophyl-tyrosyl-methioninium (Tyr-Met) (with W-128)) is located at residues 250–276; it reads YVNPEGPRGNADPASAAHFIRETFRRM. Histidine 291 serves as a coordination point for heme b.

This sequence belongs to the peroxidase family. Peroxidase/catalase subfamily. Homodimer or homotetramer. Heme b serves as cofactor. Formation of the three residue Trp-Tyr-Met cross-link is important for the catalase, but not the peroxidase activity of the enzyme.

The enzyme catalyses H2O2 + AH2 = A + 2 H2O. It carries out the reaction 2 H2O2 = O2 + 2 H2O. Bifunctional enzyme with both catalase and broad-spectrum peroxidase activity. This chain is Catalase-peroxidase, found in Salinispora tropica (strain ATCC BAA-916 / DSM 44818 / JCM 13857 / NBRC 105044 / CNB-440).